The following is a 141-amino-acid chain: Large ribosomal subunit protein uL16 (141 aa).

This sequence belongs to the universal ribosomal protein uL16 family. In terms of assembly, part of the 50S ribosomal subunit.

Binds 23S rRNA and is also seen to make contacts with the A and possibly P site tRNAs. The polypeptide is Large ribosomal subunit protein uL16 (Kosmotoga olearia (strain ATCC BAA-1733 / DSM 21960 / TBF 19.5.1)).